The sequence spans 938 residues: Isoleucine--tRNA ligase (938 aa).

A 'HIGH' region motif is present at residues 58 to 68 (PYANGSIHIGH). Lys183 is subject to N6-acetyllysine. Glu561 is a binding site for L-isoleucyl-5'-AMP. The 'KMSKS' region signature appears at 602–606 (KMSKS). An ATP-binding site is contributed by Lys605. Zn(2+) contacts are provided by Cys901, Cys904, Cys921, and Cys924.

This sequence belongs to the class-I aminoacyl-tRNA synthetase family. IleS type 1 subfamily. Monomer. The cofactor is Zn(2+).

The protein localises to the cytoplasm. The catalysed reaction is tRNA(Ile) + L-isoleucine + ATP = L-isoleucyl-tRNA(Ile) + AMP + diphosphate. In terms of biological role, catalyzes the attachment of isoleucine to tRNA(Ile). As IleRS can inadvertently accommodate and process structurally similar amino acids such as valine, to avoid such errors it has two additional distinct tRNA(Ile)-dependent editing activities. One activity is designated as 'pretransfer' editing and involves the hydrolysis of activated Val-AMP. The other activity is designated 'posttransfer' editing and involves deacylation of mischarged Val-tRNA(Ile). The protein is Isoleucine--tRNA ligase of Escherichia coli (strain 55989 / EAEC).